Here is a 402-residue protein sequence, read N- to C-terminus: Tyrosine--tRNA ligase (402 aa).

Positions 47 to 56 (PTAPDLHLGH) match the 'HIGH' region motif. The short motif at 232 to 236 (KMSKS) is the 'KMSKS' region element. Residue Lys235 participates in ATP binding. An S4 RNA-binding domain is found at 341 to 401 (VGVLDVLKQI…GKKRFMKLNI (61 aa)).

Belongs to the class-I aminoacyl-tRNA synthetase family. TyrS type 2 subfamily. In terms of assembly, homodimer.

The protein resides in the cytoplasm. The enzyme catalyses tRNA(Tyr) + L-tyrosine + ATP = L-tyrosyl-tRNA(Tyr) + AMP + diphosphate + H(+). Functionally, catalyzes the attachment of tyrosine to tRNA(Tyr) in a two-step reaction: tyrosine is first activated by ATP to form Tyr-AMP and then transferred to the acceptor end of tRNA(Tyr). The chain is Tyrosine--tRNA ligase from Helicobacter pylori (strain J99 / ATCC 700824) (Campylobacter pylori J99).